Here is a 218-residue protein sequence, read N- to C-terminus: Ribonuclease HII (218 aa).

In terms of domain architecture, RNase H type-2 spans 24 to 218 (ESIAGVDEVG…KLFAVNGSLT (195 aa)). A divalent metal cation-binding residues include D30, E31, and D126.

Belongs to the RNase HII family. Mn(2+) is required as a cofactor. Mg(2+) serves as cofactor.

It is found in the cytoplasm. The catalysed reaction is Endonucleolytic cleavage to 5'-phosphomonoester.. Endonuclease that specifically degrades the RNA of RNA-DNA hybrids. The polypeptide is Ribonuclease HII (Prochlorococcus marinus (strain MIT 9313)).